The following is a 267-amino-acid chain: Thiamine pyrophosphokinase 2 (267 aa).

This sequence belongs to the thiamine pyrophosphokinase family.

It is found in the cytoplasm. It localises to the cytosol. It carries out the reaction thiamine + ATP = thiamine diphosphate + AMP + H(+). The protein operates within cofactor biosynthesis; thiamine diphosphate biosynthesis; thiamine diphosphate from thiamine: step 1/1. Catalyzes the phosphorylation of thiamine to thiamine pyrophosphate (TPP). TPP is an active cofactor for enzymes involved in glycolysis and energy production. Plant leaves require high levels of TPP for photosynthesis and carbohydrate metabolism. In Oryza sativa subsp. japonica (Rice), this protein is Thiamine pyrophosphokinase 2 (TPK2).